Here is a 425-residue protein sequence, read N- to C-terminus: Glucose-6-phosphate 1-dehydrogenase (425 aa).

NADP(+)-binding residues include Arg44 and Lys135. 4 residues coordinate substrate: His165, Lys169, Glu201, and Asp220. The Proton acceptor role is filled by His225. Lys311 serves as a coordination point for substrate.

The protein belongs to the glucose-6-phosphate dehydrogenase family.

It carries out the reaction D-glucose 6-phosphate + NADP(+) = 6-phospho-D-glucono-1,5-lactone + NADPH + H(+). It functions in the pathway carbohydrate degradation; pentose phosphate pathway; D-ribulose 5-phosphate from D-glucose 6-phosphate (oxidative stage): step 1/3. Functionally, catalyzes the oxidation of glucose 6-phosphate to 6-phosphogluconolactone. The polypeptide is Glucose-6-phosphate 1-dehydrogenase (Helicobacter pylori (strain J99 / ATCC 700824) (Campylobacter pylori J99)).